The primary structure comprises 461 residues: Bifunctional protein GlmU (461 aa).

Residues 1 to 229 are pyrophosphorylase; the sequence is MLKKEINVVI…CKEILGVNNK (229 aa). UDP-N-acetyl-alpha-D-glucosamine-binding positions include 11–14, lysine 25, glutamine 76, 81–82, 103–105, glycine 140, glutamate 154, and asparagine 227; these read LAAG, GT, and YGD. Aspartate 105 contributes to the Mg(2+) binding site. Asparagine 227 serves as a coordination point for Mg(2+). The tract at residues 230-250 is linker; the sequence is LQLSILEKIFRKKQVNDLLLS. The segment at 251–461 is N-acetyltransferase; sequence GVTLKDPNHF…PQKIIKKTDQ (211 aa). Arginine 333 and lysine 351 together coordinate UDP-N-acetyl-alpha-D-glucosamine. Residue histidine 363 is the Proton acceptor of the active site. 2 residues coordinate UDP-N-acetyl-alpha-D-glucosamine: tyrosine 366 and asparagine 377. Residues alanine 380, 386–387, and alanine 423 contribute to the acetyl-CoA site; that span reads NY.

In the N-terminal section; belongs to the N-acetylglucosamine-1-phosphate uridyltransferase family. It in the C-terminal section; belongs to the transferase hexapeptide repeat family. As to quaternary structure, homotrimer. Requires Mg(2+) as cofactor.

It is found in the cytoplasm. The enzyme catalyses alpha-D-glucosamine 1-phosphate + acetyl-CoA = N-acetyl-alpha-D-glucosamine 1-phosphate + CoA + H(+). It carries out the reaction N-acetyl-alpha-D-glucosamine 1-phosphate + UTP + H(+) = UDP-N-acetyl-alpha-D-glucosamine + diphosphate. It participates in nucleotide-sugar biosynthesis; UDP-N-acetyl-alpha-D-glucosamine biosynthesis; N-acetyl-alpha-D-glucosamine 1-phosphate from alpha-D-glucosamine 6-phosphate (route II): step 2/2. Its pathway is nucleotide-sugar biosynthesis; UDP-N-acetyl-alpha-D-glucosamine biosynthesis; UDP-N-acetyl-alpha-D-glucosamine from N-acetyl-alpha-D-glucosamine 1-phosphate: step 1/1. The protein operates within bacterial outer membrane biogenesis; LPS lipid A biosynthesis. Catalyzes the last two sequential reactions in the de novo biosynthetic pathway for UDP-N-acetylglucosamine (UDP-GlcNAc). The C-terminal domain catalyzes the transfer of acetyl group from acetyl coenzyme A to glucosamine-1-phosphate (GlcN-1-P) to produce N-acetylglucosamine-1-phosphate (GlcNAc-1-P), which is converted into UDP-GlcNAc by the transfer of uridine 5-monophosphate (from uridine 5-triphosphate), a reaction catalyzed by the N-terminal domain. The polypeptide is Bifunctional protein GlmU (Buchnera aphidicola subsp. Schizaphis graminum (strain Sg)).